The primary structure comprises 257 residues: Nickel import system ATP-binding protein NikD (257 aa).

The ABC transporter domain maps to 4–245 (IDIQNLTIKN…HLHPYTERLI (242 aa)). 37–44 (GESGAGKS) provides a ligand contact to ATP.

This sequence belongs to the ABC transporter superfamily. As to quaternary structure, the complex is composed of two ATP-binding proteins (NikD and NikE), two transmembrane proteins (NikB and NikC) and a solute-binding protein (NikA).

The protein resides in the cell membrane. It catalyses the reaction Ni(2+)(out) + ATP + H2O = Ni(2+)(in) + ADP + phosphate + H(+). Its function is as follows. Part of the ABC transporter complex NikABCDE (Opp2) involved in nickel import. Probably responsible for energy coupling to the transport system. The chain is Nickel import system ATP-binding protein NikD from Staphylococcus aureus (strain MRSA252).